Reading from the N-terminus, the 908-residue chain is Glutamate receptor ionotropic, kainate 2 (908 aa).

Residues 1 to 31 form the signal peptide; sequence MKIIFPILSNPVFRRTVKLLLCLLWIGYSQG. The Extracellular segment spans residues 32-561; sequence TTHVLRFGGI…VFSFLNPLSP (530 aa). N-linked (GlcNAc...) asparagine glycans are attached at residues asparagine 67, asparagine 73, asparagine 275, asparagine 378, asparagine 412, asparagine 423, and asparagine 430. An intrachain disulfide couples cysteine 96 to cysteine 347. L-glutamate is bound by residues proline 516, alanine 518, and arginine 523. An N-linked (GlcNAc...) asparagine glycan is attached at asparagine 546. A helical transmembrane segment spans residues 562 to 582; that stretch reads DIWMYILLAYLGVSCVLFVIA. The Cytoplasmic segment spans residues 583–635; the sequence is RFSPYEWYNPHPCNPDSDVVENNFTLLNSFWFGVGALMQQGSELMPKALSTRI. The chain crosses the membrane as a helical span at residues 636–656; that stretch reads VGGIWWFFTLIIISSYTANLA. Residues 657–819 are Extracellular-facing; sequence AFLTVERMES…KEASALGVQN (163 aa). L-glutamate contacts are provided by alanine 689, threonine 690, and glutamate 738. Cysteine 750 and cysteine 804 are oxidised to a cystine. Asparagine 751 is a glycosylation site (N-linked (GlcNAc...) asparagine). The chain crosses the membrane as a helical span at residues 820–840; it reads IGGIFIVLAAGLVLSVFVAVG. At 841–908 the chain is on the cytoplasmic side; it reads EFLYKSKKNA…RRLPGKETMA (68 aa). A phosphoserine; by PKC mark is found at serine 846 and serine 868. Residue lysine 886 forms a Glycyl lysine isopeptide (Lys-Gly) (interchain with G-Cter in SUMO1) linkage.

This sequence belongs to the glutamate-gated ion channel (TC 1.A.10.1) family. GRIK2 subfamily. In terms of assembly, homotetramer and heterotetramer with GRIK5. Tetramers may be formed by the dimerization of dimers. Assembles into a kainate-gated homomeric channel that does not bind AMPA. Can form functional heteromeric receptors with GRIK5. Can form functional heteromeric receptors with GRIK3 and GRIK4. Interacts with DLG4. Interacts with NETO2. Interacts (via C-terminus) with KLHL17 (via kelch repeats); the interaction targets GRIK2 for degradation via ubiquitin-proteasome pathway. Sumoylation mediates kainate receptor-mediated endocytosis and regulates synaptic transmission. Sumoylation is enhanced by PIAS3 and desumoylated by SENP1. Post-translationally, ubiquitinated. Ubiquitination regulates the GRIK2 levels at the synapse by leading kainate receptor degradation through proteasome. In terms of processing, phosphorylated by PKC at Ser-868 upon agonist activation, this directly enhance sumoylation. As to expression, expression is higher in cerebellum than in cerebral cortex.

The protein localises to the cell membrane. It is found in the postsynaptic cell membrane. The catalysed reaction is Ca(2+)(in) = Ca(2+)(out). The enzyme catalyses Na(+)(in) = Na(+)(out). With respect to regulation, cold receptor activity activated by temperatures between 10-19 degrees Celsius. Its function is as follows. Ionotropic glutamate receptor that functions as a cation permeable ligand-gated ion channel, gated by L-glutamate and the glutamatergic agonist kainic acid. L-glutamate acts as an excitatory neurotransmitter at many synapses in the central nervous system. Binding of the excitatory neurotransmitter L-glutamate induces a conformation change, leading to the opening of the cation channel, and thereby converts the chemical signal to an electrical impulse. The receptor then desensitizes rapidly and enters a transient inactive state, characterized by the presence of bound agonist. Modulates cell surface expression of NETO2. In association with GRIK3, involved in presynaptic facilitation of glutamate release at hippocampal mossy fiber synapses. Functionally, independent of its ionotropic glutamate receptor activity, acts as a thermoreceptor conferring sensitivity to cold temperatures. Functions in dorsal root ganglion neurons. The sequence is that of Glutamate receptor ionotropic, kainate 2 (GRIK2) from Homo sapiens (Human).